The following is a 172-amino-acid chain: Small ribosomal subunit protein uS5 (172 aa).

Positions 11–74 (LSEVLVDVNR…QAAKKRMMKV (64 aa)) constitute an S5 DRBM domain.

It belongs to the universal ribosomal protein uS5 family. In terms of assembly, part of the 30S ribosomal subunit. Contacts proteins S4 and S8.

With S4 and S12 plays an important role in translational accuracy. Its function is as follows. Located at the back of the 30S subunit body where it stabilizes the conformation of the head with respect to the body. This Rickettsia canadensis (strain McKiel) protein is Small ribosomal subunit protein uS5.